We begin with the raw amino-acid sequence, 467 residues long: AT-rich interactive domain-containing protein cfi-1 (467 aa).

The tract at residues 1–56 (MSVRIDEPQLFVSMSKEPTQETVNVGGHHDDSSSNCDERVDDQTEEQKSPPASPDL) is disordered. A compositionally biased stretch (basic and acidic residues) spans 27 to 48 (GHHDDSSSNCDERVDDQTEEQK). An ARID domain is found at 181 to 273 (DVKRKEWLDD…YLYDYECEKE (93 aa)). Residues 356 to 464 (AILEAHQRNL…GVLFALDETV (109 aa)) enclose the REKLES domain. Residues 383–441 (LTACSNGNGGNIHNSGRESTSSNDSDIPAKRPKLENDVKTNGASSMRISTKHSDNSKTS) are disordered. A compositionally biased stretch (basic and acidic residues) spans 409 to 420 (IPAKRPKLENDV). The segment covering 421–430 (KTNGASSMRI) has biased composition (polar residues).

In terms of tissue distribution, present in IL2 and URA neurons, and in AVD and PVC interneurons. Present in muscles from head and pharynx (at protein level).

The protein resides in the nucleus. Transcription factor. Regulates neuronal subtype identity. Involved in motor neuron fate determination and maintenance, acting as a transcriptional repressor to counteract gene activation by transcription factor unc-3 in a subset of motor neurons. Probably acts by binding to specific promoter elements. Promotes differentiation of URA sensory neurons and prevents them from expressing male-specific CEM neuronal features. Promotes differentiation of AVD and PVC interneurons and their glutamate receptor expression. This is AT-rich interactive domain-containing protein cfi-1 (cfi-1) from Caenorhabditis elegans.